The following is an 86-amino-acid chain: Small ribosomal subunit protein bS20 (86 aa).

The tract at residues 1 to 25 (MANSASSRKRARQAVKRNKHNSQIR) is disordered. Positions 7–25 (SRKRARQAVKRNKHNSQIR) are enriched in basic residues.

This sequence belongs to the bacterial ribosomal protein bS20 family.

In terms of biological role, binds directly to 16S ribosomal RNA. In Vesicomyosocius okutanii subsp. Calyptogena okutanii (strain HA), this protein is Small ribosomal subunit protein bS20.